We begin with the raw amino-acid sequence, 363 residues long: uncharacterized protein (363 aa).

The next 4 helical transmembrane spans lie at 34–54 (YVYDIALIAISILCIVSIILW), 60–80 (LALFAIAPALAIGALGVTLLV), 91–111 (EIADTVAAVSLPFILTGTAAG), and 112–132 (LMFSAIAVGGGAVILANPLFL). The span at 232 to 245 (SSTTTHSTDSEQIL) shows a compositional bias: polar residues. The tract at residues 232-363 (SSTTTHSTDS…SSQKKKPSRK (132 aa)) is disordered. Composition is skewed to low complexity over residues 246-268 (TSVSPQSSDTESSSSSSFHTPPN) and 275-285 (DSNSSDSSSSS). Over residues 322–342 (SRSERNAQHHRNKDQEQRQDS) the composition is skewed to basic and acidic residues.

This sequence belongs to the chlamydial CPn_0443/CT_005/TC_0273 family.

Its subcellular location is the cell membrane. This is an uncharacterized protein from Chlamydia trachomatis serovar D (strain ATCC VR-885 / DSM 19411 / UW-3/Cx).